The chain runs to 109 residues: Nucleoid-associated protein A1S_1684 (109 aa).

Belongs to the YbaB/EbfC family. As to quaternary structure, homodimer.

Its subcellular location is the cytoplasm. It is found in the nucleoid. Binds to DNA and alters its conformation. May be involved in regulation of gene expression, nucleoid organization and DNA protection. The sequence is that of Nucleoid-associated protein A1S_1684 from Acinetobacter baumannii (strain ATCC 17978 / DSM 105126 / CIP 53.77 / LMG 1025 / NCDC KC755 / 5377).